The primary structure comprises 227 residues: Paired immunoglobulin-like type 2 receptor beta (227 aa).

Positions methionine 1–leucine 19 are cleaved as a signal peptide. Topologically, residues glutamine 20–arginine 191 are extracellular. The region spanning proline 21–lysine 143 is the Ig-like V-type domain. N-linked (GlcNAc...) asparagine glycosylation occurs at asparagine 100. A helical membrane pass occupies residues valine 192–leucine 212. The Cytoplasmic segment spans residues tryptophan 213 to phenylalanine 227.

The protein resides in the membrane. Its function is as follows. Paired receptors consist of highly related activating and inhibitory receptors and are widely involved in the regulation of the immune system. PILRB is thought to act as a cellular signaling activating receptor that associates with ITAM-bearing adapter molecules on the cell surface. This chain is Paired immunoglobulin-like type 2 receptor beta (PILRB), found in Homo sapiens (Human).